The sequence spans 285 residues: UPF0354 protein MW1686 (285 aa).

It belongs to the UPF0354 family.

The polypeptide is UPF0354 protein MW1686 (Staphylococcus aureus (strain MW2)).